Consider the following 283-residue polypeptide: 2-dehydro-3-deoxyphosphooctonate aldolase (283 aa).

The protein belongs to the KdsA family.

The protein localises to the cytoplasm. It carries out the reaction D-arabinose 5-phosphate + phosphoenolpyruvate + H2O = 3-deoxy-alpha-D-manno-2-octulosonate-8-phosphate + phosphate. It functions in the pathway carbohydrate biosynthesis; 3-deoxy-D-manno-octulosonate biosynthesis; 3-deoxy-D-manno-octulosonate from D-ribulose 5-phosphate: step 2/3. The protein operates within bacterial outer membrane biogenesis; lipopolysaccharide biosynthesis. This is 2-dehydro-3-deoxyphosphooctonate aldolase from Vibrio parahaemolyticus serotype O3:K6 (strain RIMD 2210633).